We begin with the raw amino-acid sequence, 306 residues long: Recombination-associated protein RdgC (306 aa).

This sequence belongs to the RdgC family.

The protein localises to the cytoplasm. Its subcellular location is the nucleoid. Its function is as follows. May be involved in recombination. This chain is Recombination-associated protein RdgC, found in Pseudomonas paraeruginosa (strain DSM 24068 / PA7) (Pseudomonas aeruginosa (strain PA7)).